The following is a 59-amino-acid chain: uncharacterized protein (59 aa).

The protein resides in the mitochondrion. This is an uncharacterized protein from Ascobolus immersus.